Here is a 98-residue protein sequence, read N- to C-terminus: Small ribosomal subunit protein bS6 (98 aa).

Belongs to the bacterial ribosomal protein bS6 family.

Binds together with bS18 to 16S ribosomal RNA. This Moorella thermoacetica (strain ATCC 39073 / JCM 9320) protein is Small ribosomal subunit protein bS6.